Consider the following 130-residue polypeptide: Arsenical-resistance protein 2 (130 aa).

The region spanning 17 to 124 is the Rhodanese domain; sequence QRKDFQVVDL…WETHCRESNL (108 aa).

In terms of biological role, involved in resistance to arsenic compounds. This Saccharomyces cerevisiae (strain ATCC 204508 / S288c) (Baker's yeast) protein is Arsenical-resistance protein 2 (ARR2).